Here is a 111-residue protein sequence, read N- to C-terminus: Ig kappa chain V-III region MOPC 70 (111 aa).

The framework-1 stretch occupies residues 1 to 23 (DIVLTQSPASLAVSLGQRATISC). A disulfide bridge connects residues cysteine 23 and cysteine 92. Residues 24 to 38 (RASESVDNSGISFMN) form a complementarity-determining-1 region. Positions 39–53 (WFQQKPGQPPKLLIY) are framework-2. The tract at residues 54–60 (AASNQGS) is complementarity-determining-2. The tract at residues 61–92 (GVPARFSGSGSGTDFSLNIHPMEEDDTAMYFC) is framework-3. Residues 93 to 101 (QQSKEVPWT) form a complementarity-determining-3 region. The tract at residues 102 to 111 (FGGGTKLEIK) is framework-4.

The sequence is that of Ig kappa chain V-III region MOPC 70 from Mus musculus (Mouse).